Here is a 369-residue protein sequence, read N- to C-terminus: Glutamate 5-kinase (369 aa).

Lys9 lines the ATP pocket. 3 residues coordinate substrate: Ser49, Asp136, and Asn148. Residues 168–169 and 210–216 each bind ATP; these read TD and TGGMLTK. The 81-residue stretch at 275–355 folds into the PUA domain; it reads QGSIWVDKGA…KGVLIYRDDW (81 aa).

The protein belongs to the glutamate 5-kinase family.

It localises to the cytoplasm. It carries out the reaction L-glutamate + ATP = L-glutamyl 5-phosphate + ADP. It participates in amino-acid biosynthesis; L-proline biosynthesis; L-glutamate 5-semialdehyde from L-glutamate: step 1/2. Functionally, catalyzes the transfer of a phosphate group to glutamate to form L-glutamate 5-phosphate. This chain is Glutamate 5-kinase, found in Streptococcus pneumoniae (strain Hungary19A-6).